We begin with the raw amino-acid sequence, 126 residues long: Holo-[acyl-carrier-protein] synthase (126 aa).

Asp-9 and Glu-58 together coordinate Mg(2+).

The protein belongs to the P-Pant transferase superfamily. AcpS family. Requires Mg(2+) as cofactor.

It localises to the cytoplasm. It catalyses the reaction apo-[ACP] + CoA = holo-[ACP] + adenosine 3',5'-bisphosphate + H(+). Its function is as follows. Transfers the 4'-phosphopantetheine moiety from coenzyme A to a Ser of acyl-carrier-protein. The sequence is that of Holo-[acyl-carrier-protein] synthase from Vibrio parahaemolyticus serotype O3:K6 (strain RIMD 2210633).